We begin with the raw amino-acid sequence, 502 residues long: MQIKAEEISKIIEEQIQSYEQRVEMSETGTVLSVGDGIARVYGVRNAMAMELLEFPGGLMGMVLNLEEDNVGVALLGEDTGIKEGDPVKRTGKIFSVPVGDEVMGRVLNPLGQPIDGLGPLEAKEFRPVELKAPGIIARKSVHQPMPTGIKAIDAMTPIGRGQRELIIGDRQTGKTAVCIDAILAQRDTGIRCFYVAIGQKKATVALVADTLRKHGAMEYTTIISATASEPAPLQFISAYSGCTMAEFYRDKGDHALIIYDDLSKQAVAYRQMSLLLRRPPGREAYPGDVFYLHSRLLERAAKVNDSLGAGSLTALPIIETQAGDVSAYIPTNVISITDGQVYLEPNLFNAGIRPAINVGLSVSRVGGAAQIKAMKQVAGTMRLDLAQYRELAAFAQFGSDLDKATKQKLDRGARLVELLKQPQYQPMPVEQQVASMYAATRGLMDDVPVLAIRKFEAEMLDFLKNSKADILNDIKTKKALDADIEDRLKAAVAEFKKGFQA.

169-176 (GDRQTGKT) is a binding site for ATP.

It belongs to the ATPase alpha/beta chains family. As to quaternary structure, F-type ATPases have 2 components, CF(1) - the catalytic core - and CF(0) - the membrane proton channel. CF(1) has five subunits: alpha(3), beta(3), gamma(1), delta(1), epsilon(1). CF(0) has three main subunits: a(1), b(2) and c(9-12). The alpha and beta chains form an alternating ring which encloses part of the gamma chain. CF(1) is attached to CF(0) by a central stalk formed by the gamma and epsilon chains, while a peripheral stalk is formed by the delta and b chains.

It is found in the cell inner membrane. The enzyme catalyses ATP + H2O + 4 H(+)(in) = ADP + phosphate + 5 H(+)(out). In terms of biological role, produces ATP from ADP in the presence of a proton gradient across the membrane. The alpha chain is a regulatory subunit. The protein is ATP synthase subunit alpha of Nitratidesulfovibrio vulgaris (strain DSM 19637 / Miyazaki F) (Desulfovibrio vulgaris).